Consider the following 158-residue polypeptide: uncharacterized protein (158 aa).

The next 3 membrane-spanning stretches (helical) occupy residues 45-65 (GIFF…PAVI), 76-96 (LAIG…IFAW), and 106-126 (FILV…VFAL).

The protein to U.parvum UU007, UU041 and UU042.

The protein localises to the cell membrane. This is an uncharacterized protein from Ureaplasma parvum serovar 3 (strain ATCC 700970).